The chain runs to 84 residues: MSLLDFFRSRKSQNSASIAKERLQIIVAHERGQRAQPDYLPQLQKDLLEVIRKYVPIDQEQIQVELENQGNCSILELNITLPDR.

The protein belongs to the MinE family.

In terms of biological role, prevents the cell division inhibition by proteins MinC and MinD at internal division sites while permitting inhibition at polar sites. This ensures cell division at the proper site by restricting the formation of a division septum at the midpoint of the long axis of the cell. This chain is Cell division topological specificity factor, found in Pseudomonas aeruginosa (strain LESB58).